Reading from the N-terminus, the 1149-residue chain is Potassium channel subfamily U member 1 (1149 aa).

At 1-24 the chain is on the extracellular side; the sequence is MFQTKLRNETWEDLPKMSCTTEIQ. The helical transmembrane segment at 25–45 threads the bilayer; sequence AAFILSSFVTFFSGLIILLIF. Over 46 to 101 the chain is Cytoplasmic; it reads RLIWRSVKKWQIIKGTGIILELFTSGTIARSHVRSLHFQGQFRDHIEMLLSAQTFV. The chain crosses the membrane as a helical span at residues 102–122; it reads GQVLVILVFVLSIGSLIIYFI. The Extracellular segment spans residues 123 to 138; that stretch reads NSADPVGSCSSYEDKT. The helical transmembrane segment at 139–159 threads the bilayer; the sequence is IPIDLVFNAFFSFYFGLRFMA. Residues 160 to 163 lie on the Cytoplasmic side of the membrane; it reads ADDK. Residues 164-184 form a helical membrane-spanning segment; that stretch reads IKFWLEMNSIVDIFTIPPTFI. Residues 185–188 lie on the Extracellular side of the membrane; it reads SYYL. The chain crosses the membrane as a helical; Voltage-sensor span at residues 189–209; sequence KSNWLGLRFLRALRLLELPQI. Topologically, residues 210–226 are cytoplasmic; sequence LQILRAIKTSNSVKFSK. The helical transmembrane segment at 227 to 247 threads the bilayer; that stretch reads LLSIILSTWFTAAGFIHLVEN. Residues 248–259 lie on the Extracellular side of the membrane; sequence SGDPWLKGRNSQ. The pore-forming intramembrane region spans 260–282; sequence NISYFESIYLVMATTSTVGFGDV. Positions 276-279 match the Selectivity for potassium motif; that stretch reads TVGF. The Extracellular portion of the chain corresponds to 283–291; sequence VAKTSLGRT. Residues 292–312 traverse the membrane as a helical segment; the sequence is FIMFFTLGSLILFANYIPEMV. Residues 313 to 1149 lie on the Cytoplasmic side of the membrane; that stretch reads ELFANKRKYT…EDPFAYSEPL (837 aa). RCK N-terminal domains follow at residues 331 to 473 and 713 to 884; these read KKFI…DNII and RNHI…EGSL. Disordered stretches follow at residues 828–854 and 1118–1149; these read QIDS…NEKS and SQIP…SEPL. Over residues 830 to 840 the composition is skewed to low complexity; it reads DSSSDPSPSVS. Residues 1125-1135 are compositionally biased toward basic and acidic residues; that stretch reads NAKENERKTSD.

It belongs to the potassium channel family. Calcium-activated (TC 1.A.1.3) subfamily. KCa5.1/KCNU1 sub-subfamily. In terms of assembly, homotetramer; which constitutes the activated potassium channel. Interacts with LRRC52; this interaction changes channel gating properties, such as shifting gating to more negative potentials at a given pH. As to expression, testis-specific.

Its subcellular location is the cell membrane. The protein localises to the cell projection. It is found in the cilium. It localises to the flagellum membrane. The enzyme catalyses K(+)(in) = K(+)(out). Regulated by changes in cytosolic pH; activated by alkalization. Activated by intracellular Ca(2+). Despite strong sequence similarity, human KCNU1 channels are significantly more sensitive to activation by internal Ca(2+) and less pH-sensitive than mouse KCNU1. VU0546110 acts as a selective inhibitor. The auxiliary subunit LRRC52 shifts the activation of KCNU1 to more negative potentials at a given pH. Functionally, testis-specific potassium channel activated by both intracellular pH and membrane voltage that mediates export of K(+). Represents the primary spermatozoan K(+) current. The channel underlies a pH-triggered membrane hyperpolarization during the process of sperm capacitation, as sperm encounter the alkaline environment near the ovum in the female reproductive tract, thereby playing an essential for male fertility. This chain is Potassium channel subfamily U member 1, found in Homo sapiens (Human).